We begin with the raw amino-acid sequence, 154 residues long: Catabolic 3-dehydroquinase (154 aa).

Y25 serves as the catalytic Proton acceptor. Substrate is bound by residues N79, H85, and D92. H105 serves as the catalytic Proton donor. Substrate contacts are provided by residues I106–S107 and R116.

Belongs to the type-II 3-dehydroquinase family. Homododecamer. Adopts a ring-like structure, composed of an arrangement of two hexameric rings stacked on top of one another.

It catalyses the reaction 3-dehydroquinate = 3-dehydroshikimate + H2O. It functions in the pathway aromatic compound metabolism; 3,4-dihydroxybenzoate biosynthesis; 3,4-dihydroxybenzoate from 3-dehydroquinate: step 1/2. Is involved in the catabolism of quinate. Allows the utilization of quinate as carbon source via the beta-ketoadipate pathway. The sequence is that of Catabolic 3-dehydroquinase from Botryotinia fuckeliana (strain B05.10) (Noble rot fungus).